The primary structure comprises 103 residues: Large ribosomal subunit protein bL21 (103 aa).

Belongs to the bacterial ribosomal protein bL21 family. As to quaternary structure, part of the 50S ribosomal subunit. Contacts protein L20.

In terms of biological role, this protein binds to 23S rRNA in the presence of protein L20. In Cupriavidus metallidurans (strain ATCC 43123 / DSM 2839 / NBRC 102507 / CH34) (Ralstonia metallidurans), this protein is Large ribosomal subunit protein bL21.